We begin with the raw amino-acid sequence, 813 residues long: ATP-dependent zinc metalloprotease FTSH 10, mitochondrial (813 aa).

The transit peptide at 1–86 directs the protein to the mitochondrion; the sequence is MIFSKLGSSL…FANPRLRRFF (86 aa). Positions 93 to 129 are disordered; that stretch reads KKNYENYYPKDSKKAPKNEQKSESRDGSKKNENENAG. Positions 94–125 are enriched in basic and acidic residues; the sequence is KNYENYYPKDSKKAPKNEQKSESRDGSKKNEN. Residues 139-157 traverse the membrane as a helical segment; sequence MLIPLMAIALILSTFSLGS. 367–374 contacts ATP; it reads GPPGTGKT. His592 contributes to the Zn(2+) binding site. The active site involves Glu593. Zn(2+) is bound by residues His596 and Asp668. Residues 764–790 are compositionally biased toward basic and acidic residues; the sequence is RPFKSGETTNYDRFKSGFEESEKESQK. Positions 764–813 are disordered; sequence RPFKSGETTNYDRFKSGFEESEKESQKESVPVKPVEDDGIPPLEPQVVPT.

In the N-terminal section; belongs to the AAA ATPase family. It in the C-terminal section; belongs to the peptidase M41 family. Requires Zn(2+) as cofactor.

It localises to the mitochondrion inner membrane. In terms of biological role, probable ATP-dependent zinc metallopeptidase. Involved in the assembly and/or stability of the complexes I and V of the mitochondrial oxidative phosphorylation system. This is ATP-dependent zinc metalloprotease FTSH 10, mitochondrial (FTSH10) from Arabidopsis thaliana (Mouse-ear cress).